Reading from the N-terminus, the 169-residue chain is Shikimate kinase (169 aa).

Residue Gly12–Thr17 coordinates ATP. Ser16 contributes to the Mg(2+) binding site. Substrate is bound by residues Asp34, Arg57, and Gly79. Arg116 lines the ATP pocket. Arg133 provides a ligand contact to substrate.

The protein belongs to the shikimate kinase family. Monomer. It depends on Mg(2+) as a cofactor.

It is found in the cytoplasm. The catalysed reaction is shikimate + ATP = 3-phosphoshikimate + ADP + H(+). Its pathway is metabolic intermediate biosynthesis; chorismate biosynthesis; chorismate from D-erythrose 4-phosphate and phosphoenolpyruvate: step 5/7. Functionally, catalyzes the specific phosphorylation of the 3-hydroxyl group of shikimic acid using ATP as a cosubstrate. This Clostridium beijerinckii (strain ATCC 51743 / NCIMB 8052) (Clostridium acetobutylicum) protein is Shikimate kinase.